The primary structure comprises 265 residues: MYNPSQAVPVSLHKNQDNQDGGQQRSHYPQISSQQSQSYLSVPSIGTPSFGSVGSVSSLAPGSSFIPPSPMAPLTPATPASSESSGIVPQLQNIVSTVNLNCRLDLKKIALHARNAEYNPKRFAAVIMRIREPRTTALIFSSGKMVCTGAKREDNSRLAARKYARVVQKLGFAAKFLDFKIQNMVGSCDVKFPIRLEGLVLTHGQFSSYEPELFPGLIYRMVKPRIVLLIFVSGKVVLTGAKVRQEIYDAFNNIYPILKSFKKTS.

The disordered stretch occupies residues M1–L40. Positions N18–P29 are enriched in polar residues. Repeat copies occupy residues L91–V167 and I181–L258.

This sequence belongs to the TBP family. In terms of assembly, belongs to the TFIID complex together with the TBP-associated factors (TAFs). Binds DNA as monomer.

It is found in the nucleus. In terms of biological role, general transcription factor that functions at the core of the DNA-binding multiprotein factor TFIID. Binding of TFIID to the TATA box is the initial transcriptional step of the pre-initiation complex (PIC), playing a role in the activation of eukaryotic genes transcribed by RNA polymerase II. The sequence is that of TATA-box-binding protein from Strongylocentrotus purpuratus (Purple sea urchin).